Consider the following 194-residue polypeptide: MPSAEQTSWVILAGGQASRMGGNDKGLVELTGKAMIEHVIGTLSPQTSSITINANRNQERYSQYGSVFGDNIQDYPGPLGGIHAAIHHLDDEWIGFVPCDCPQLPHDLVERMANACSEDTDIAVAHDGEHIQPVVTLLHRRILPKLEAFLANGDRKIILLYRQCNMITVDFSDQPNAFVNLNTPEELQQFGQTL.

GTP is bound by residues 12–14 (LAG), K25, N53, D70, and D100. Mg(2+) is bound at residue D100.

The protein belongs to the MobA family. In terms of assembly, monomer. Mg(2+) is required as a cofactor.

The protein localises to the cytoplasm. The catalysed reaction is Mo-molybdopterin + GTP + H(+) = Mo-molybdopterin guanine dinucleotide + diphosphate. Transfers a GMP moiety from GTP to Mo-molybdopterin (Mo-MPT) cofactor (Moco or molybdenum cofactor) to form Mo-molybdopterin guanine dinucleotide (Mo-MGD) cofactor. The polypeptide is Molybdenum cofactor guanylyltransferase (Photobacterium profundum (strain SS9)).